The chain runs to 500 residues: Aspartyl/glutamyl-tRNA(Asn/Gln) amidotransferase subunit B (500 aa).

The protein belongs to the GatB/GatE family. GatB subfamily. In terms of assembly, heterotrimer of A, B and C subunits.

It catalyses the reaction L-glutamyl-tRNA(Gln) + L-glutamine + ATP + H2O = L-glutaminyl-tRNA(Gln) + L-glutamate + ADP + phosphate + H(+). It carries out the reaction L-aspartyl-tRNA(Asn) + L-glutamine + ATP + H2O = L-asparaginyl-tRNA(Asn) + L-glutamate + ADP + phosphate + 2 H(+). Functionally, allows the formation of correctly charged Asn-tRNA(Asn) or Gln-tRNA(Gln) through the transamidation of misacylated Asp-tRNA(Asn) or Glu-tRNA(Gln) in organisms which lack either or both of asparaginyl-tRNA or glutaminyl-tRNA synthetases. The reaction takes place in the presence of glutamine and ATP through an activated phospho-Asp-tRNA(Asn) or phospho-Glu-tRNA(Gln). The chain is Aspartyl/glutamyl-tRNA(Asn/Gln) amidotransferase subunit B from Clavibacter sepedonicus (Clavibacter michiganensis subsp. sepedonicus).